The primary structure comprises 624 residues: MSMVRSFFDGLTNVLSGAGTSVDKRVHARYGLNIVDQHQVEASYRTSWLARKIVDMPAHDMTREWRDWKADGELIGKIEAEEKRLCLRERVTQAIVLGRLGGGAIYLGIKGDDPSQPLAVEHIRPGQLSYIAVFSRWQLTIGQEVSDPEDALFGGPDYFQITSIANKVGVRIHPSRMVIFKGAHVMRGIGSQWEDAFWGDPIYQAVGDAIRNADSAQNSFASLIDEATYDVIGIPGLMERLSQPGGDAQLSKRLDAARQGKSNHRAIILDSGEGGKDAETWVTRQVTWAGMPELMAAFLQTVAGASDIPYTRLLGTSATGMSATGEGDKNDYLSSIATKQETMLRPNMVRIDAVMLRSAGIKDELWFDWSPLFEMGEKERAALDKLKADTAKVWGDSGLVPIDALAKGAQNLLTEDGTYPGLDEELKKAEAIVAPDADVAPVVANPDDLGLTSEAKPKPLLKIVGDAAPRPLYVNRPLLNAAEFIAWAKAQGFKTTTPADDLHVTILYSKTPVDWMKMGTDGWGSDAKGNLDVAPGGARIVEPLGDKGAVVLLFTSSSLSWRHEEMVRNGASHDFDEYQSHVTISYDASDVDLSKVEPYRGVLKFGPEVFTEIVEDWKPTGGEA.

Tyr-106 contributes to the 3',3'-cGAMP binding site. Tyr-106 is a 3',3'-cUAMP binding site. Residues His-503, Thr-505, His-581, and Thr-583 contribute to the active site. Trp-617 contacts 3',3'-cGAMP. Trp-617 is a 3',3'-cUAMP binding site.

This sequence belongs to the anti-CBASS protein Acb1 family.

It carries out the reaction 3',3'-cUAMP + H2O = U[3'-5']pAp[3'] + H(+). The catalysed reaction is 3',3',3'-c-tri-AMP + H2O = A[3'-5']pA[3'-5']pAp[3'] + H(+). The enzyme catalyses 3',3',3'-cAAG + H2O = G[3'-5']pA[3'-5']pAp[3'] + H(+). It catalyses the reaction 3',3',3'-cAAG + H2O = A[3'-5']pG[3'-5']pAp[3'] + H(+). It carries out the reaction 3',3'-cGAMP + H2O = G[3'-5']pAp[3'] + H(+). Counteracts or regulates the endogenous CBASS antiviral defense system. Phosphodiesterase that enables metal-independent hydrolysis of the host cyclic di- and trinucleotide CBASS signals such as 3'3'-cGAMP, 3'3'cUA, and 3'3'3'-cAAA. The polypeptide is Anti-CBASS protein Acb1 (Sphingomonas paeninsulae).